The following is a 209-amino-acid chain: Uracil phosphoribosyltransferase (209 aa).

5-phospho-alpha-D-ribose 1-diphosphate contacts are provided by residues Arg79, Arg104, and Asp131–Ser139. Uracil contacts are provided by residues Ile194 and Gly199–Ala201. Asp200 is a binding site for 5-phospho-alpha-D-ribose 1-diphosphate.

The protein belongs to the UPRTase family. Mg(2+) serves as cofactor.

It carries out the reaction UMP + diphosphate = 5-phospho-alpha-D-ribose 1-diphosphate + uracil. The protein operates within pyrimidine metabolism; UMP biosynthesis via salvage pathway; UMP from uracil: step 1/1. With respect to regulation, allosterically activated by GTP. Catalyzes the conversion of uracil and 5-phospho-alpha-D-ribose 1-diphosphate (PRPP) to UMP and diphosphate. The protein is Uracil phosphoribosyltransferase of Rhizobium leguminosarum bv. trifolii (strain WSM2304).